The following is a 204-amino-acid chain: 8-oxoguanine DNA glycosylase/AP lyase (204 aa).

Residues K129 and D147 contribute to the active site.

It belongs to the type-2 OGG1 family.

It carries out the reaction 2'-deoxyribonucleotide-(2'-deoxyribose 5'-phosphate)-2'-deoxyribonucleotide-DNA = a 3'-end 2'-deoxyribonucleotide-(2,3-dehydro-2,3-deoxyribose 5'-phosphate)-DNA + a 5'-end 5'-phospho-2'-deoxyribonucleoside-DNA + H(+). Catalyzes the excision of an oxidatively damaged form of guanine (7,8-dihydro-8-oxoguanine = 8-oxoG) from DNA. Also cleaves the DNA backbone at apurinic/apyrimidinic sites (AP sites). Prefers oligomers containing 8-oxoG:C, 8-oxoG:T and 8-oxoG:G base pairs, and is less effective on oligomers containing 8-oxoG:A mispairs. The protein is 8-oxoguanine DNA glycosylase/AP lyase of Thermoplasma volcanium (strain ATCC 51530 / DSM 4299 / JCM 9571 / NBRC 15438 / GSS1).